The primary structure comprises 237 residues: Ribonuclease PH (237 aa).

Phosphate is bound by residues arginine 86 and 124-126; that span reads GTR.

The protein belongs to the RNase PH family. In terms of assembly, homohexameric ring arranged as a trimer of dimers.

The enzyme catalyses tRNA(n+1) + phosphate = tRNA(n) + a ribonucleoside 5'-diphosphate. Phosphorolytic 3'-5' exoribonuclease that plays an important role in tRNA 3'-end maturation. Removes nucleotide residues following the 3'-CCA terminus of tRNAs; can also add nucleotides to the ends of RNA molecules by using nucleoside diphosphates as substrates, but this may not be physiologically important. Probably plays a role in initiation of 16S rRNA degradation (leading to ribosome degradation) during starvation. The sequence is that of Ribonuclease PH from Methylocella silvestris (strain DSM 15510 / CIP 108128 / LMG 27833 / NCIMB 13906 / BL2).